Consider the following 141-residue polypeptide: Putative lipoprotein Tanf_09445 (141 aa).

Residues 1 to 20 (MKQKIILWIGALLLLTAGTG) form the signal peptide. Residue C21 is the site of N-palmitoyl cysteine attachment. The S-diacylglycerol cysteine moiety is linked to residue C21.

The protein resides in the cell membrane. This chain is Putative lipoprotein Tanf_09445, found in Tannerella forsythia (strain ATCC 43037 / JCM 10827 / CCUG 21028 A / KCTC 5666 / FDC 338) (Bacteroides forsythus).